Reading from the N-terminus, the 329-residue chain is GTP 3',8-cyclase (329 aa).

Residues 1-229 enclose the Radical SAM core domain; sequence MNQIDYLRIS…EGQVRGNGPA (229 aa). Arg-8 contributes to the GTP binding site. [4Fe-4S] cluster contacts are provided by Cys-15 and Cys-19. Tyr-21 contributes to the S-adenosyl-L-methionine binding site. Cys-22 contacts [4Fe-4S] cluster. Arg-60 is a GTP binding site. Gly-64 contributes to the S-adenosyl-L-methionine binding site. Position 91 (Thr-91) interacts with GTP. Ser-115 is a binding site for S-adenosyl-L-methionine. Lys-155 serves as a coordination point for GTP. An S-adenosyl-L-methionine-binding site is contributed by Met-189. Residues Cys-252 and Cys-255 each coordinate [4Fe-4S] cluster. 257-259 contributes to the GTP binding site; that stretch reads RLR. Cys-269 is a [4Fe-4S] cluster binding site.

It belongs to the radical SAM superfamily. MoaA family. As to quaternary structure, monomer and homodimer. [4Fe-4S] cluster serves as cofactor.

The enzyme catalyses GTP + AH2 + S-adenosyl-L-methionine = (8S)-3',8-cyclo-7,8-dihydroguanosine 5'-triphosphate + 5'-deoxyadenosine + L-methionine + A + H(+). It participates in cofactor biosynthesis; molybdopterin biosynthesis. Its function is as follows. Catalyzes the cyclization of GTP to (8S)-3',8-cyclo-7,8-dihydroguanosine 5'-triphosphate. The protein is GTP 3',8-cyclase of Microcystis aeruginosa (strain NIES-843 / IAM M-2473).